Here is a 212-residue protein sequence, read N- to C-terminus: Octanoyltransferase (212 aa).

A BPL/LPL catalytic domain is found at 31-209 (AETQDEIWLV…HFADLLGYNI (179 aa)). Residues 70 to 77 (RGGQITYH), 138 to 140 (SLG), and 151 to 153 (GLA) contribute to the substrate site. Cys169 (acyl-thioester intermediate) is an active-site residue.

The protein belongs to the LipB family.

The protein resides in the cytoplasm. The enzyme catalyses octanoyl-[ACP] + L-lysyl-[protein] = N(6)-octanoyl-L-lysyl-[protein] + holo-[ACP] + H(+). Its pathway is protein modification; protein lipoylation via endogenous pathway; protein N(6)-(lipoyl)lysine from octanoyl-[acyl-carrier-protein]: step 1/2. Its function is as follows. Catalyzes the transfer of endogenously produced octanoic acid from octanoyl-acyl-carrier-protein onto the lipoyl domains of lipoate-dependent enzymes. Lipoyl-ACP can also act as a substrate although octanoyl-ACP is likely to be the physiological substrate. The sequence is that of Octanoyltransferase from Haemophilus influenzae (strain PittEE).